Here is a 122-residue protein sequence, read N- to C-terminus: Large ribosomal subunit protein uL14 (122 aa).

Belongs to the universal ribosomal protein uL14 family. In terms of assembly, part of the 50S ribosomal subunit. Forms a cluster with proteins L3 and L19. In the 70S ribosome, L14 and L19 interact and together make contacts with the 16S rRNA in bridges B5 and B8.

Functionally, binds to 23S rRNA. Forms part of two intersubunit bridges in the 70S ribosome. This Levilactobacillus brevis (strain ATCC 367 / BCRC 12310 / CIP 105137 / JCM 1170 / LMG 11437 / NCIMB 947 / NCTC 947) (Lactobacillus brevis) protein is Large ribosomal subunit protein uL14.